A 421-amino-acid polypeptide reads, in one-letter code: Large ribosomal subunit protein uL4 (421 aa).

Ala-2 carries the post-translational modification N-acetylalanine. Lys-14 is subject to N6-acetyllysine. Omega-N-methylarginine is present on Arg-97. An N6-acetyllysine modification is found at Lys-106. Lys-239 is covalently cross-linked (Glycyl lysine isopeptide (Lys-Gly) (interchain with G-Cter in SUMO2)). Lys-259 carries the post-translational modification N6-acetyllysine. The residue at position 266 (Thr-266) is a Phosphothreonine. Ser-290 is modified (phosphoserine). A Citrulline modification is found at Arg-300. A Glycyl lysine isopeptide (Lys-Gly) (interchain with G-Cter in SUMO2) cross-link involves residue Lys-327. N6-acetyllysine occurs at positions 333 and 353. Positions 359-421 (EAKSEEKGVP…PTTEEKKPAA (63 aa)) are disordered. Residue Lys-361 is modified to N6-acetyllysine; alternate. Residue Lys-361 forms a Glycyl lysine isopeptide (Lys-Gly) (interchain with G-Cter in SUMO1); alternate linkage. Position 362 is a phosphoserine (Ser-362). Residues 368–391 (PGKKPRRKKGKKTVGVKKPKKPVV) are compositionally biased toward basic residues. The span at 401 to 421 (PAADKKPAEKKPTTEEKKPAA) shows a compositional bias: basic and acidic residues.

Belongs to the universal ribosomal protein uL4 family. In terms of assembly, component of the large ribosomal subunit. May bind IPO9 with low affinity. Interacts with RBM3. In terms of processing, citrullinated by PADI4.

It localises to the cytoplasm. Its function is as follows. Component of the large ribosomal subunit. The ribosome is a large ribonucleoprotein complex responsible for the synthesis of proteins in the cell. The protein is Large ribosomal subunit protein uL4 (RPL4) of Canis lupus familiaris (Dog).